Reading from the N-terminus, the 107-residue chain is uncharacterized protein (107 aa).

This is an uncharacterized protein from Acidianus convivator (ABV).